We begin with the raw amino-acid sequence, 357 residues long: Red-sensitive opsin-1 (357 aa).

Over 1 to 49 (MAEHWGDAIYAARRKGDETTREAMFTYTNSNNTKDPFEGPNYHIAPRWV) the chain is Extracellular. A glycan (N-linked (GlcNAc...) asparagine) is linked at Asn31. The chain crosses the membrane as a helical span at residues 50 to 74 (YNVATVWMFFVVVASTFTNGLVLVA). Residues 75–86 (TAKFKKLRHPLN) are Cytoplasmic-facing. Residues 87 to 112 (WILVNLAIADLGETLFASTISVINQF) traverse the membrane as a helical segment. At 113 to 126 (FGYFILGHPMCIFE) the chain is on the extracellular side. A disulfide bridge links Cys123 with Cys200. A helical membrane pass occupies residues 127–146 (GYTVSVCGIAALWSLTVISW). Over 147–165 (ERWVVVCKPFGNVKFDAKW) the chain is Cytoplasmic. The helical transmembrane segment at 166 to 189 (ASAGIIFSWVWAAAWCAPPIFGWS) threads the bilayer. The Extracellular portion of the chain corresponds to 190–215 (RYWPHGLKTSCGPDVFSGSEDPGVQS). A helical membrane pass occupies residues 216–243 (YMVVLMITCCIIPLAIIILCYIAVYLAI). Residues 244-265 (HAVAQQQKDSESTQKAEKEVSR) lie on the Cytoplasmic side of the membrane. Residues 266–289 (MVVVMIFAYCFCWGPYTFFACFAA) traverse the membrane as a helical segment. The Extracellular segment spans residues 290–297 (ANPGYAFH). Residues 298-322 (PLAAAMPAYFAKSATIYNPVIYVFM) traverse the membrane as a helical segment. An N6-(retinylidene)lysine modification is found at Lys309. Topologically, residues 323–357 (NRQFRVCIMQLFGKKVDDGSEVSTSKTEVSSVAPA) are cytoplasmic.

This sequence belongs to the G-protein coupled receptor 1 family. Opsin subfamily. Post-translationally, phosphorylated on some or all of the serine and threonine residues present in the C-terminal region. As to expression, retinal double cone principal photoreceptor cell outer segments.

It is found in the membrane. Its function is as follows. Visual pigments are the light-absorbing molecules that mediate vision. They consist of an apoprotein, opsin, covalently linked to cis-retinal. This Danio rerio (Zebrafish) protein is Red-sensitive opsin-1 (opn1lw1).